The sequence spans 214 residues: ATP phosphoribosyltransferase (214 aa).

Belongs to the ATP phosphoribosyltransferase family. Short subfamily. In terms of assembly, heteromultimer composed of HisG and HisZ subunits.

It localises to the cytoplasm. It carries out the reaction 1-(5-phospho-beta-D-ribosyl)-ATP + diphosphate = 5-phospho-alpha-D-ribose 1-diphosphate + ATP. The protein operates within amino-acid biosynthesis; L-histidine biosynthesis; L-histidine from 5-phospho-alpha-D-ribose 1-diphosphate: step 1/9. Catalyzes the condensation of ATP and 5-phosphoribose 1-diphosphate to form N'-(5'-phosphoribosyl)-ATP (PR-ATP). Has a crucial role in the pathway because the rate of histidine biosynthesis seems to be controlled primarily by regulation of HisG enzymatic activity. The polypeptide is ATP phosphoribosyltransferase (hisG) (Aquifex aeolicus (strain VF5)).